The following is a 160-amino-acid chain: Major pollen allergen Bet v 1-C (160 aa).

K55, Y82, Y84, and N101 together coordinate brassinolide.

This sequence belongs to the BetVI family.

The protein localises to the cytoplasm. In terms of biological role, may be a general steroid carrier protein. This is Major pollen allergen Bet v 1-C (BETV1C) from Betula pendula (European white birch).